The following is a 609-amino-acid chain: Proline--tRNA ligase (609 aa).

It belongs to the class-II aminoacyl-tRNA synthetase family. ProS type 1 subfamily. Homodimer.

The protein resides in the cytoplasm. The enzyme catalyses tRNA(Pro) + L-proline + ATP = L-prolyl-tRNA(Pro) + AMP + diphosphate. In terms of biological role, catalyzes the attachment of proline to tRNA(Pro) in a two-step reaction: proline is first activated by ATP to form Pro-AMP and then transferred to the acceptor end of tRNA(Pro). As ProRS can inadvertently accommodate and process non-cognate amino acids such as alanine and cysteine, to avoid such errors it has two additional distinct editing activities against alanine. One activity is designated as 'pretransfer' editing and involves the tRNA(Pro)-independent hydrolysis of activated Ala-AMP. The other activity is designated 'posttransfer' editing and involves deacylation of mischarged Ala-tRNA(Pro). The misacylated Cys-tRNA(Pro) is not edited by ProRS. This Synechococcus sp. (strain JA-3-3Ab) (Cyanobacteria bacterium Yellowstone A-Prime) protein is Proline--tRNA ligase.